An 87-amino-acid chain; its full sequence is Insertion element IS407 uncharacterized 10.0 kDa protein (87 aa).

This sequence belongs to the transposase 8 family.

The sequence is that of Insertion element IS407 uncharacterized 10.0 kDa protein from Burkholderia multivorans (strain ATCC 17616 / 249).